A 117-amino-acid chain; its full sequence is Ig heavy chain V region MOPC 173 (117 aa).

The 116-residue stretch at 1-116 folds into the Ig-like domain; sequence EVKLLESGGP…WGQGTSVTVS (116 aa). C22 and C96 are joined by a disulfide.

This chain is Ig heavy chain V region MOPC 173, found in Mus musculus (Mouse).